We begin with the raw amino-acid sequence, 521 residues long: Acetylcholine receptor subunit beta-like 1 (521 aa).

The first 24 residues, 1–24 (MESSCKSWLLCSILVLVAFSLVSA), serve as a signal peptide directing secretion. Over 25–235 (SEDEERLVRD…ITFYIIIRRK (211 aa)) the chain is Extracellular. Asparagine 48 is a glycosylation site (N-linked (GlcNAc...) asparagine). The cysteines at positions 152 and 166 are disulfide-linked. 3 helical membrane-spanning segments follow: residues 236 to 260 (TLFY…VFYL), 268 to 286 (VTLG…LLVS), and 302 to 323 (YLLF…IINW). The Cytoplasmic portion of the chain corresponds to 324 to 481 (NFRGPRTHRM…WKYVAMVIDR (158 aa)). Residues 482-500 (LQLYIFFIVTTAGTVGILM) form a helical membrane-spanning segment.

It belongs to the ligand-gated ion channel (TC 1.A.9) family. Acetylcholine receptor (TC 1.A.9.1) subfamily. In terms of tissue distribution, CNS in embryos.

Its subcellular location is the postsynaptic cell membrane. The protein localises to the cell membrane. Its function is as follows. After binding acetylcholine, the AChR responds by an extensive change in conformation that affects all subunits and leads to opening of an ion-conducting channel across the plasma membrane. The chain is Acetylcholine receptor subunit beta-like 1 (nAChRbeta1) from Drosophila melanogaster (Fruit fly).